The following is a 226-amino-acid chain: Cytidylate kinase (226 aa).

ATP is bound at residue 10 to 18; sequence GPASSGKST.

The protein belongs to the cytidylate kinase family. Type 1 subfamily.

Its subcellular location is the cytoplasm. The enzyme catalyses CMP + ATP = CDP + ADP. It carries out the reaction dCMP + ATP = dCDP + ADP. The sequence is that of Cytidylate kinase from Streptococcus thermophilus (strain CNRZ 1066).